The sequence spans 663 residues: UvrABC system protein B (663 aa).

A Helicase ATP-binding domain is found at 26–414 (DGLESGLAKQ…DNVAEQVVRP (389 aa)). 39-46 (GVTGSGKT) is a binding site for ATP. The Beta-hairpin signature appears at 92-115 (YYDYYQPEAYVPASDTFIEKDASI). The 167-residue stretch at 430–596 (QVDDLMSEIR…GINKSVEDIL (167 aa)) folds into the Helicase C-terminal domain. In terms of domain architecture, UVR spans 624–659 (AKQINALEKQMYAHAQNMEFELAAKIRDEYLLLKEQ).

The protein belongs to the UvrB family. As to quaternary structure, forms a heterotetramer with UvrA during the search for lesions. Interacts with UvrC in an incision complex.

The protein resides in the cytoplasm. Its function is as follows. The UvrABC repair system catalyzes the recognition and processing of DNA lesions. A damage recognition complex composed of 2 UvrA and 2 UvrB subunits scans DNA for abnormalities. Upon binding of the UvrA(2)B(2) complex to a putative damaged site, the DNA wraps around one UvrB monomer. DNA wrap is dependent on ATP binding by UvrB and probably causes local melting of the DNA helix, facilitating insertion of UvrB beta-hairpin between the DNA strands. Then UvrB probes one DNA strand for the presence of a lesion. If a lesion is found the UvrA subunits dissociate and the UvrB-DNA preincision complex is formed. This complex is subsequently bound by UvrC and the second UvrB is released. If no lesion is found, the DNA wraps around the other UvrB subunit that will check the other stand for damage. The protein is UvrABC system protein B of Legionella pneumophila (strain Lens).